The sequence spans 232 residues: DNA repair protein RecO (232 aa).

This sequence belongs to the RecO family.

In terms of biological role, involved in DNA repair and RecF pathway recombination. The chain is DNA repair protein RecO from Francisella tularensis subsp. novicida (strain U112).